Consider the following 241-residue polypeptide: 2-C-methyl-D-erythritol 4-phosphate cytidylyltransferase (241 aa).

This sequence belongs to the IspD/TarI cytidylyltransferase family. IspD subfamily. In terms of assembly, homodimer.

It catalyses the reaction 2-C-methyl-D-erythritol 4-phosphate + CTP + H(+) = 4-CDP-2-C-methyl-D-erythritol + diphosphate. It participates in isoprenoid biosynthesis; isopentenyl diphosphate biosynthesis via DXP pathway; isopentenyl diphosphate from 1-deoxy-D-xylulose 5-phosphate: step 2/6. Functionally, catalyzes the formation of 4-diphosphocytidyl-2-C-methyl-D-erythritol from CTP and 2-C-methyl-D-erythritol 4-phosphate (MEP). The sequence is that of 2-C-methyl-D-erythritol 4-phosphate cytidylyltransferase from Yersinia pseudotuberculosis serotype I (strain IP32953).